Reading from the N-terminus, the 262-residue chain is Ornithine carbamoyltransferase (262 aa).

Residues 3–7 (STRTR), Gln30, Arg54, and 81–84 (HPTQ) contribute to the carbamoyl phosphate site. L-ornithine is bound by residues Asn114, Asp178, and 182–183 (SM). Carbamoyl phosphate is bound by residues 219–222 (HCLP) and Thr247.

The protein belongs to the aspartate/ornithine carbamoyltransferase superfamily. OTCase family.

The protein localises to the cytoplasm. The enzyme catalyses carbamoyl phosphate + L-ornithine = L-citrulline + phosphate + H(+). It functions in the pathway amino-acid biosynthesis; L-arginine biosynthesis; L-arginine from L-ornithine and carbamoyl phosphate: step 1/3. Functionally, reversibly catalyzes the transfer of the carbamoyl group from carbamoyl phosphate (CP) to the N(epsilon) atom of ornithine (ORN) to produce L-citrulline. The polypeptide is Ornithine carbamoyltransferase (argF) (Neisseria mucosa).